Reading from the N-terminus, the 226-residue chain is Late protein I226R (226 aa).

The N-terminal stretch at 1–16 is a signal peptide; the sequence is MKMETFLVCLFHNAKG. Residue asparagine 164 is glycosylated (N-linked (GlcNAc...) asparagine; by host).

The protein belongs to the asfivirus I226R family.

In terms of biological role, plays a role in the inhibition of host NF-kappa-B and IRF3 signaling pathways. Mechanistically, promotes the degradation of host IKBKG through enhancing its ubiquitination leading to inhibition of both pathways. The protein is Late protein I226R of Ornithodoros (relapsing fever ticks).